Reading from the N-terminus, the 577-residue chain is Phosphoenolpyruvate-protein phosphotransferase (577 aa).

His-191 (tele-phosphohistidine intermediate) is an active-site residue. 2 residues coordinate phosphoenolpyruvate: Arg-298 and Arg-334. The Mg(2+) site is built by Glu-435 and Asp-459. Residues 458-459 (ND) and Arg-469 contribute to the phosphoenolpyruvate site. Cys-506 serves as the catalytic Proton donor.

Belongs to the PEP-utilizing enzyme family. Homodimer. The cofactor is Mg(2+).

It localises to the cytoplasm. It catalyses the reaction L-histidyl-[protein] + phosphoenolpyruvate = N(pros)-phospho-L-histidyl-[protein] + pyruvate. In terms of biological role, general (non sugar-specific) component of the phosphoenolpyruvate-dependent sugar phosphotransferase system (sugar PTS). This major carbohydrate active-transport system catalyzes the phosphorylation of incoming sugar substrates concomitantly with their translocation across the cell membrane. Enzyme I transfers the phosphoryl group from phosphoenolpyruvate (PEP) to the phosphoryl carrier protein (HPr). This chain is Phosphoenolpyruvate-protein phosphotransferase (ptsI), found in Streptococcus equinus (Streptococcus bovis).